A 457-amino-acid polypeptide reads, in one-letter code: Bifunctional protein GlmU (457 aa).

Residues 1–230 (MLNVVILAAG…SWETLGVNSR (230 aa)) form a pyrophosphorylase region. UDP-N-acetyl-alpha-D-glucosamine contacts are provided by residues 7–10 (LAAG), Lys-21, Gln-73, 78–79 (GT), 104–106 (YGD), Gly-140, Glu-155, Asn-170, and Asn-228. Residue Asp-106 coordinates Mg(2+). Asn-228 contributes to the Mg(2+) binding site. The tract at residues 231–251 (VQQAQLERAWQSELARRQLEA) is linker. Residues 252-457 (GVTLADPARF…EGWKRPVKKS (206 aa)) form an N-acetyltransferase region. The UDP-N-acetyl-alpha-D-glucosamine site is built by Arg-334 and Lys-352. His-364 (proton acceptor) is an active-site residue. UDP-N-acetyl-alpha-D-glucosamine is bound by residues Tyr-367 and Asn-378. Acetyl-CoA is bound by residues Ala-381, 387-388 (NY), Ser-406, Ala-424, and Arg-441.

In the N-terminal section; belongs to the N-acetylglucosamine-1-phosphate uridyltransferase family. This sequence in the C-terminal section; belongs to the transferase hexapeptide repeat family. In terms of assembly, homotrimer. Requires Mg(2+) as cofactor.

It is found in the cytoplasm. It carries out the reaction alpha-D-glucosamine 1-phosphate + acetyl-CoA = N-acetyl-alpha-D-glucosamine 1-phosphate + CoA + H(+). The enzyme catalyses N-acetyl-alpha-D-glucosamine 1-phosphate + UTP + H(+) = UDP-N-acetyl-alpha-D-glucosamine + diphosphate. The protein operates within nucleotide-sugar biosynthesis; UDP-N-acetyl-alpha-D-glucosamine biosynthesis; N-acetyl-alpha-D-glucosamine 1-phosphate from alpha-D-glucosamine 6-phosphate (route II): step 2/2. Its pathway is nucleotide-sugar biosynthesis; UDP-N-acetyl-alpha-D-glucosamine biosynthesis; UDP-N-acetyl-alpha-D-glucosamine from N-acetyl-alpha-D-glucosamine 1-phosphate: step 1/1. It participates in bacterial outer membrane biogenesis; LPS lipid A biosynthesis. Catalyzes the last two sequential reactions in the de novo biosynthetic pathway for UDP-N-acetylglucosamine (UDP-GlcNAc). The C-terminal domain catalyzes the transfer of acetyl group from acetyl coenzyme A to glucosamine-1-phosphate (GlcN-1-P) to produce N-acetylglucosamine-1-phosphate (GlcNAc-1-P), which is converted into UDP-GlcNAc by the transfer of uridine 5-monophosphate (from uridine 5-triphosphate), a reaction catalyzed by the N-terminal domain. The sequence is that of Bifunctional protein GlmU from Bordetella bronchiseptica (strain ATCC BAA-588 / NCTC 13252 / RB50) (Alcaligenes bronchisepticus).